Here is a 61-residue protein sequence, read N- to C-terminus: Three-finger hemachatoxin (61 aa).

Disulfide bonds link cysteine 3-cysteine 22, cysteine 15-cysteine 39, cysteine 43-cysteine 54, and cysteine 55-cysteine 60.

Belongs to the three-finger toxin family. Short-chain subfamily. Type IB cytotoxin sub-subfamily. Expressed by the venom gland.

Its subcellular location is the secreted. This protein lyses red blood cells and has cardiotoxic and hypotensive activities. The chain is Three-finger hemachatoxin from Hemachatus haemachatus (Rinkhals).